The primary structure comprises 362 residues: Glutamine synthetase (362 aa).

Residues 26 to 107 form the GS beta-grasp domain; sequence LIAEYIWIDS…VLSECWNADG (82 aa). One can recognise a GS catalytic domain in the interval 114-362; it reads HRHEAAKLME…METCFGAVSE (249 aa).

Belongs to the glutamine synthetase family. Homooctamer.

Its subcellular location is the cytoplasm. The enzyme catalyses L-glutamate + NH4(+) + ATP = L-glutamine + ADP + phosphate + H(+). The protein is Glutamine synthetase (gln-1) of Neurospora crassa (strain ATCC 24698 / 74-OR23-1A / CBS 708.71 / DSM 1257 / FGSC 987).